We begin with the raw amino-acid sequence, 375 residues long: 23S rRNA (uracil(747)-C(5))-methyltransferase RlmC (375 aa).

[4Fe-4S] cluster-binding residues include C3, C11, C14, and C87. The S-adenosyl-L-methionine site is built by Q212, F241, E262, and N307. The Nucleophile role is filled by C334.

Belongs to the class I-like SAM-binding methyltransferase superfamily. RNA M5U methyltransferase family. RlmC subfamily.

The enzyme catalyses uridine(747) in 23S rRNA + S-adenosyl-L-methionine = 5-methyluridine(747) in 23S rRNA + S-adenosyl-L-homocysteine + H(+). Its function is as follows. Catalyzes the formation of 5-methyl-uridine at position 747 (m5U747) in 23S rRNA. The chain is 23S rRNA (uracil(747)-C(5))-methyltransferase RlmC from Shigella boydii serotype 18 (strain CDC 3083-94 / BS512).